A 442-amino-acid chain; its full sequence is tRNA modification GTPase MnmE (442 aa).

Arg21, Glu79, and Lys118 together coordinate (6S)-5-formyl-5,6,7,8-tetrahydrofolate. The TrmE-type G domain maps to 215–365; the sequence is GLKIAIVGKP…LENKLSSYCN (151 aa). Residues 225–230, 244–250, and 269–272 contribute to the GTP site; these read NVGKSS, TNEAGTT, and DTAG. The Mg(2+) site is built by Ser229 and Thr250. Position 442 (Lys442) interacts with (6S)-5-formyl-5,6,7,8-tetrahydrofolate.

The protein belongs to the TRAFAC class TrmE-Era-EngA-EngB-Septin-like GTPase superfamily. TrmE GTPase family. In terms of assembly, homodimer. Heterotetramer of two MnmE and two MnmG subunits. Requires K(+) as cofactor.

The protein localises to the cytoplasm. Exhibits a very high intrinsic GTPase hydrolysis rate. Involved in the addition of a carboxymethylaminomethyl (cmnm) group at the wobble position (U34) of certain tRNAs, forming tRNA-cmnm(5)s(2)U34. This Mycoplasma mobile (strain ATCC 43663 / 163K / NCTC 11711) (Mesomycoplasma mobile) protein is tRNA modification GTPase MnmE.